Reading from the N-terminus, the 1261-residue chain is SNF2 domain-containing protein CLASSY 2 (1261 aa).

The disordered stretch occupies residues 458–479 (FQKRTSRSSRSVAPKTEDSDEP). In terms of domain architecture, Helicase ATP-binding spans 704-904 (DPTSGNIGGC…FNTLCLARPK (201 aa)). 717-724 (HSPGAGKT) lines the ATP pocket. The short motif at 855-858 (DEGH) is the DEAH box element. Residues 1067–1232 (FVLNLIFRVV…DPSLWQAEKI (166 aa)) form the Helicase C-terminal domain.

This sequence belongs to the helicase family. In terms of assembly, interacts with NRPD1 and SHH1.

It is found in the nucleus. Probable chromatin remodeling factor. The chain is SNF2 domain-containing protein CLASSY 2 (CLSY2) from Arabidopsis thaliana (Mouse-ear cress).